We begin with the raw amino-acid sequence, 37 residues long: Potassium channel toxin alpha-KTx 1.4 (37 aa).

3 disulfide bridges follow: C7–C28, C13–C33, and C17–C35.

The protein belongs to the short scorpion toxin superfamily. Potassium channel inhibitor family. Alpha-KTx 01 subfamily. As to expression, expressed by the venom gland.

It localises to the secreted. Blocks selectively the high conductance calcium-activated (maxi-K) potassium channels. In Centruroides limbatus (Bark scorpion), this protein is Potassium channel toxin alpha-KTx 1.4.